The primary structure comprises 158 residues: Phosphopantetheine adenylyltransferase (158 aa).

Residue Thr10 coordinates substrate. Residues 10–11 and His18 contribute to the ATP site; that span reads TF. Lys42, Leu74, and Arg88 together coordinate substrate. ATP-binding positions include 89 to 91, Glu99, and 124 to 130; these read GLR and NSFISST.

It belongs to the bacterial CoaD family. As to quaternary structure, homohexamer. Mg(2+) is required as a cofactor.

It localises to the cytoplasm. The catalysed reaction is (R)-4'-phosphopantetheine + ATP + H(+) = 3'-dephospho-CoA + diphosphate. It participates in cofactor biosynthesis; coenzyme A biosynthesis; CoA from (R)-pantothenate: step 4/5. Its function is as follows. Reversibly transfers an adenylyl group from ATP to 4'-phosphopantetheine, yielding dephospho-CoA (dPCoA) and pyrophosphate. This is Phosphopantetheine adenylyltransferase from Shewanella woodyi (strain ATCC 51908 / MS32).